Reading from the N-terminus, the 494-residue chain is Putative glucuronosyltransferase PGSIP7 (494 aa).

A helical membrane pass occupies residues 4–24 (QRTLMFSCWVLSLLIIKTTAY). 2 residues coordinate Mn(2+): aspartate 161 and aspartate 163. The next 5 membrane-spanning stretches (helical) occupy residues 316–336 (YSAE…IILV), 362–382 (AFKF…FFII), 389–409 (LIGW…PINA), 410–430 (FLLP…TLLV), and 444–464 (LSVF…FVKI).

Belongs to the glycosyltransferase 8 family. Glycogenin subfamily. It depends on Mn(2+) as a cofactor.

The protein localises to the membrane. This Arabidopsis thaliana (Mouse-ear cress) protein is Putative glucuronosyltransferase PGSIP7 (PGSIP7).